Here is a 591-residue protein sequence, read N- to C-terminus: V-type ATP synthase alpha chain (591 aa).

Residue 233–240 (GPFGAGKT) participates in ATP binding.

The protein belongs to the ATPase alpha/beta chains family.

The catalysed reaction is ATP + H2O + 4 H(+)(in) = ADP + phosphate + 5 H(+)(out). Produces ATP from ADP in the presence of a proton gradient across the membrane. The V-type alpha chain is a catalytic subunit. This is V-type ATP synthase alpha chain from Streptococcus pneumoniae serotype 19F (strain G54).